A 388-amino-acid polypeptide reads, in one-letter code: Chorismate synthase (388 aa).

NADP(+)-binding residues include Arg39 and Arg45. FMN contacts are provided by residues 132-134, 251-252, Gly296, 311-315, and Arg337; these read RSS, NA, and KPIPT.

Belongs to the chorismate synthase family. Homotetramer. FMNH2 serves as cofactor.

The enzyme catalyses 5-O-(1-carboxyvinyl)-3-phosphoshikimate = chorismate + phosphate. The protein operates within metabolic intermediate biosynthesis; chorismate biosynthesis; chorismate from D-erythrose 4-phosphate and phosphoenolpyruvate: step 7/7. In terms of biological role, catalyzes the anti-1,4-elimination of the C-3 phosphate and the C-6 proR hydrogen from 5-enolpyruvylshikimate-3-phosphate (EPSP) to yield chorismate, which is the branch point compound that serves as the starting substrate for the three terminal pathways of aromatic amino acid biosynthesis. This reaction introduces a second double bond into the aromatic ring system. This Staphylococcus aureus (strain MW2) protein is Chorismate synthase.